We begin with the raw amino-acid sequence, 485 residues long: UDP-N-acetylmuramate--L-alanine ligase (485 aa).

Residue 129–135 coordinates ATP; sequence GTHGKTT.

This sequence belongs to the MurCDEF family.

It localises to the cytoplasm. The catalysed reaction is UDP-N-acetyl-alpha-D-muramate + L-alanine + ATP = UDP-N-acetyl-alpha-D-muramoyl-L-alanine + ADP + phosphate + H(+). Its pathway is cell wall biogenesis; peptidoglycan biosynthesis. Cell wall formation. The protein is UDP-N-acetylmuramate--L-alanine ligase of Vibrio campbellii (strain ATCC BAA-1116).